The primary structure comprises 312 residues: GDSL esterase/lipase At2g38180 (312 aa).

The first 22 residues, 1–22 (MVGPVRPQIVLFGSSIVQYSFT), serve as a signal peptide directing secretion. An N-linked (GlcNAc...) asparagine glycan is attached at Asn79. Positions 285–312 (EPPHPVSLCDHELTQNEQLEPPQPTARL) are disordered.

It belongs to the 'GDSL' lipolytic enzyme family.

It is found in the secreted. In Arabidopsis thaliana (Mouse-ear cress), this protein is GDSL esterase/lipase At2g38180.